Consider the following 100-residue polypeptide: Large ribosomal subunit protein uL23 (100 aa).

The protein belongs to the universal ribosomal protein uL23 family. In terms of assembly, part of the 50S ribosomal subunit. Contacts protein L29, and trigger factor when it is bound to the ribosome.

In terms of biological role, one of the early assembly proteins it binds 23S rRNA. One of the proteins that surrounds the polypeptide exit tunnel on the outside of the ribosome. Forms the main docking site for trigger factor binding to the ribosome. The protein is Large ribosomal subunit protein uL23 of Shewanella pealeana (strain ATCC 700345 / ANG-SQ1).